The chain runs to 544 residues: Probable protein kinase UbiB (544 aa).

The Protein kinase domain maps to 123–501 (DFDIKPLASA…KRQQGTGKFL (379 aa)). ATP contacts are provided by residues 129–137 (LASASIAQV) and Lys152. Residue Asp287 is the Proton acceptor of the active site. 2 helical membrane-spanning segments follow: residues 496 to 516 (GTGK…AIWI) and 519 to 539 (QLEP…LLSW).

Belongs to the ABC1 family. UbiB subfamily.

It localises to the cell inner membrane. The protein operates within cofactor biosynthesis; ubiquinone biosynthesis [regulation]. Is probably a protein kinase regulator of UbiI activity which is involved in aerobic coenzyme Q (ubiquinone) biosynthesis. This is Probable protein kinase UbiB from Vibrio cholerae serotype O1 (strain ATCC 39541 / Classical Ogawa 395 / O395).